Consider the following 267-residue polypeptide: 2-keto-3-deoxy-L-rhamnonate aldolase (267 aa).

His-49 functions as the Proton acceptor in the catalytic mechanism. Gln-151 contacts substrate. Glu-153 provides a ligand contact to Mg(2+). Residues Ala-178 and Asp-179 each contribute to the substrate site. Asp-179 lines the Mg(2+) pocket.

Belongs to the HpcH/HpaI aldolase family. KDR aldolase subfamily. Homohexamer. Mg(2+) is required as a cofactor.

The catalysed reaction is 2-dehydro-3-deoxy-L-rhamnonate = (S)-lactaldehyde + pyruvate. Catalyzes the reversible retro-aldol cleavage of 2-keto-3-deoxy-L-rhamnonate (KDR) to pyruvate and lactaldehyde. This Shigella sonnei (strain Ss046) protein is 2-keto-3-deoxy-L-rhamnonate aldolase.